Consider the following 227-residue polypeptide: PKHD-type hydroxylase Dtpsy_0528 (227 aa).

In terms of domain architecture, Fe2OG dioxygenase spans 78–178 (TIYPPKFNRY…RVASFFWIES (101 aa)). Histidine 96, aspartate 98, and histidine 159 together coordinate Fe cation. Arginine 169 is a 2-oxoglutarate binding site.

The cofactor is Fe(2+). L-ascorbate is required as a cofactor.

The sequence is that of PKHD-type hydroxylase Dtpsy_0528 from Acidovorax ebreus (strain TPSY) (Diaphorobacter sp. (strain TPSY)).